The following is a 955-amino-acid chain: MSQLLQQLGTDNEFIRRHNGPASSEHQHMLNTIGAETLQQLIEETVPSSIRLPQPMQLPHGLSENAMLAELKQIAQQNTLNTSYIGQGYYNTHTPNVILRNVLENPGWYTAYTPYQPEISQGRLEALLNYQQMVMDLTGLEIANASLLDEATAAAEAMTLCKRGGKSKSNIFFVADDVHPQTLAVIKTRAKFIGFDVIVDNESNLDSHDVFGALLQYPGTTGEVKDLTDLIAQAHTKKTLVVVATDLLASVLLKPVGEMGADIAIGSAQRFGVPMGYGGPHAAFMATREKLKRSMPGRVIGVSIDSKGNQALRMAMQTREQHIRREKATSNICTAQALLANMASFYAVYHGPEGLKTIARRVHHFTAIVAKALQTAGFELEHQHFFDTLTVKTEQQTDILYTKALASSINLRKFDTKLGISFDETTTVSDLVTLLAVFGIDNAECETLSAEVGKDEFAAIPKHCQRTSSFLTHPVFNTYHSETQMLRYLKKLENKDFSLTHGMIPLGSCTMKLNAVAEMLPVTWPEFGGIHPFAPLNQAAGYTTLATSLKSMLCEITGYDEFSLQPNSGASGEYAGLIAIQRYHESRGDAHRNVCLIPSSAHGTNPATASMVSMKVVVVKCDENGNIDMIDLAEKIEKHQENLSSIMITYPSTHGVYEEQVREVCDMVHAAGGQVYLDGANMNAQVGLTSPGFIGSDVSHLNLHKTFCIPHGGGGPGMGPIGVKSHLAPFLPGHTENGVQGTDYAVSAADLGSASILPISWAYIAMMGEMGLTEATKVAILNANYVMERLRPHYPVLYRGSNGRIAHECIIDIRPLKEATGISEEDIAKRLMDFGFHAPTMSFPVAGTLMVEPTESEDLAELDRFCDAMIAIREEMHKVEQGEWPLDNNPLVNAPHTQVDLMSDSWDHPYTREVACFPSSQSKDSKYWPTVNRVDNVYGDRNLICSCPSIENYEE.

The residue at position 705 (Lys705) is an N6-(pyridoxal phosphate)lysine.

It belongs to the GcvP family. The glycine cleavage system is composed of four proteins: P, T, L and H. Requires pyridoxal 5'-phosphate as cofactor.

It carries out the reaction N(6)-[(R)-lipoyl]-L-lysyl-[glycine-cleavage complex H protein] + glycine + H(+) = N(6)-[(R)-S(8)-aminomethyldihydrolipoyl]-L-lysyl-[glycine-cleavage complex H protein] + CO2. Functionally, the glycine cleavage system catalyzes the degradation of glycine. The P protein binds the alpha-amino group of glycine through its pyridoxal phosphate cofactor; CO(2) is released and the remaining methylamine moiety is then transferred to the lipoamide cofactor of the H protein. The sequence is that of Glycine dehydrogenase (decarboxylating) from Aliivibrio fischeri (strain MJ11) (Vibrio fischeri).